The following is a 430-amino-acid chain: MLDITLLRDSPDEIVTMLHNRQQPEDEPKLRQLLEEDAERRKLVQESDELKSLRNRKSKEIAEIKKSGSGSADALILEMQSVGTAIAEMDSRLTALETSMEDILLALPNRLHPSVPVGRSAEENEVFGEPVSFTHPLDFSLKNHLELGKSLGILDFERGAKVSGAGFPVYVGKGARLERALINFMLDSHTEKHGYKEVFPPFMVNRESLRGTGQWPKFAGEVYHAPEDELYLIPTAEVPVTNLHRGELLETESLPISYAAYSACFRREAGSYGKETRGFLRVHQFNKVEMVKFTKPEDSYQALEDIRGHAEAILRALEIPYRVLLLCSGDISANAAKCYDIEVWSPAEEKYLEASSCSNFEDYQARRANIRFRRDGKSKPEFVHTLNGSGLATSRLMVSLMEHYQTPEGGILVPEVLKPYTGFSEITPSA.

Thr235 to Glu237 provides a ligand contact to L-serine. ATP-binding positions include Arg266–Glu268 and Val282. Glu289 lines the L-serine pocket. An ATP-binding site is contributed by Glu353–Ser356. Residue Ser389 coordinates L-serine.

The protein belongs to the class-II aminoacyl-tRNA synthetase family. Type-1 seryl-tRNA synthetase subfamily. As to quaternary structure, homodimer. The tRNA molecule binds across the dimer.

The protein resides in the cytoplasm. The enzyme catalyses tRNA(Ser) + L-serine + ATP = L-seryl-tRNA(Ser) + AMP + diphosphate + H(+). The catalysed reaction is tRNA(Sec) + L-serine + ATP = L-seryl-tRNA(Sec) + AMP + diphosphate + H(+). It functions in the pathway aminoacyl-tRNA biosynthesis; selenocysteinyl-tRNA(Sec) biosynthesis; L-seryl-tRNA(Sec) from L-serine and tRNA(Sec): step 1/1. Its function is as follows. Catalyzes the attachment of serine to tRNA(Ser). Is also able to aminoacylate tRNA(Sec) with serine, to form the misacylated tRNA L-seryl-tRNA(Sec), which will be further converted into selenocysteinyl-tRNA(Sec). The sequence is that of Serine--tRNA ligase from Chlorobium phaeovibrioides (strain DSM 265 / 1930) (Prosthecochloris vibrioformis (strain DSM 265)).